A 119-amino-acid chain; its full sequence is Ribonuclease P protein component (119 aa).

Belongs to the RnpA family. As to quaternary structure, consists of a catalytic RNA component (M1 or rnpB) and a protein subunit.

It catalyses the reaction Endonucleolytic cleavage of RNA, removing 5'-extranucleotides from tRNA precursor.. Functionally, RNaseP catalyzes the removal of the 5'-leader sequence from pre-tRNA to produce the mature 5'-terminus. It can also cleave other RNA substrates such as 4.5S RNA. The protein component plays an auxiliary but essential role in vivo by binding to the 5'-leader sequence and broadening the substrate specificity of the ribozyme. The sequence is that of Ribonuclease P protein component from Listeria monocytogenes serotype 4a (strain HCC23).